The following is a 572-amino-acid chain: Methionine--tRNA ligase (572 aa).

The short motif at 11-21 (PYINGIKHLGN) is the 'HIGH' region element. Residues Cys143, Cys146, Cys156, and Cys159 each coordinate Zn(2+). The short motif at 346–350 (QFSTS) is the 'KMSKS' region element. Thr349 contacts ATP.

It belongs to the class-I aminoacyl-tRNA synthetase family. MetG type 1 subfamily. In terms of assembly, monomer. Zn(2+) is required as a cofactor.

Its subcellular location is the cytoplasm. It catalyses the reaction tRNA(Met) + L-methionine + ATP = L-methionyl-tRNA(Met) + AMP + diphosphate. Its function is as follows. Is required not only for elongation of protein synthesis but also for the initiation of all mRNA translation through initiator tRNA(fMet) aminoacylation. The sequence is that of Methionine--tRNA ligase from Ruegeria pomeroyi (strain ATCC 700808 / DSM 15171 / DSS-3) (Silicibacter pomeroyi).